The following is a 198-amino-acid chain: MEFYPVAIEKLIEEFAKLPSIGKKSAQRLTLHILNLPKDEVEEFANALVKARGTIKYCSVCGNFTDTDPCAICSNPNREKDIICVVEQPKDIMTMEKVKEFNGLYHVLHGTISPMQGRGPQDIRIRELVARMSGDVKEVIVATNPTIEGEATAMYISKILKPLDVKVTRIAAGIPVGGDLEYADEVTLSKALEGRTVI.

The C4-type zinc finger occupies 58–73 (CSVCGNFTDTDPCAIC). A Toprim domain is found at 81-175 (DIICVVEQPK…KVTRIAAGIP (95 aa)).

The protein belongs to the RecR family.

Its function is as follows. May play a role in DNA repair. It seems to be involved in an RecBC-independent recombinational process of DNA repair. It may act with RecF and RecO. The protein is Recombination protein RecR of Clostridium perfringens (strain ATCC 13124 / DSM 756 / JCM 1290 / NCIMB 6125 / NCTC 8237 / Type A).